The following is a 229-amino-acid chain: Rhamnosyl O-methyltransferase (229 aa).

Positions 1-23 (MERVRQMFSCVSGMIYRPTDSIA) are cleaved as a signal peptide.

Belongs to the rhamnosyl O-methyltransferase family.

Its function is as follows. Catalyzes the O-methylation of the hydroxyl group located on C-2 of the first rhamnosyl residue linked to the phenolic group of glycosylated phenolphthiocerol dimycocerosates (PGL) and p-hydroxybenzoic acid derivatives (p-HBAD). This Mycobacterium leprae (strain TN) protein is Rhamnosyl O-methyltransferase.